Reading from the N-terminus, the 427-residue chain is 3-phosphoshikimate 1-carboxyvinyltransferase (427 aa).

Residues Lys23, Ser24, and Arg28 each contribute to the 3-phosphoshikimate site. Lys23 is a binding site for phosphoenolpyruvate. Residues Gly97 and Arg125 each coordinate phosphoenolpyruvate. Residues Ser170, Ser171, Gln172, Ser198, Asp314, Asn337, and Lys341 each coordinate 3-phosphoshikimate. Position 172 (Gln172) interacts with phosphoenolpyruvate. Catalysis depends on Asp314, which acts as the Proton acceptor. The phosphoenolpyruvate site is built by Arg345, Arg387, and Lys412.

Belongs to the EPSP synthase family. In terms of assembly, monomer.

The protein localises to the cytoplasm. It catalyses the reaction 3-phosphoshikimate + phosphoenolpyruvate = 5-O-(1-carboxyvinyl)-3-phosphoshikimate + phosphate. Its pathway is metabolic intermediate biosynthesis; chorismate biosynthesis; chorismate from D-erythrose 4-phosphate and phosphoenolpyruvate: step 6/7. Functionally, catalyzes the transfer of the enolpyruvyl moiety of phosphoenolpyruvate (PEP) to the 5-hydroxyl of shikimate-3-phosphate (S3P) to produce enolpyruvyl shikimate-3-phosphate and inorganic phosphate. This is 3-phosphoshikimate 1-carboxyvinyltransferase from Buchnera aphidicola subsp. Acyrthosiphon pisum (strain 5A).